Here is a 155-residue protein sequence, read N- to C-terminus: Small ribosomal subunit protein uS7cz/uS7cy (155 aa).

It belongs to the universal ribosomal protein uS7 family. Part of the 30S ribosomal subunit.

The protein localises to the plastid. The protein resides in the chloroplast. One of the primary rRNA binding proteins, it binds directly to 16S rRNA where it nucleates assembly of the head domain of the 30S subunit. This chain is Small ribosomal subunit protein uS7cz/uS7cy (rps7-A), found in Acorus calamus var. americanus (American sweet flag).